The chain runs to 323 residues: C-type lectin domain family 11 member A (323 aa).

A signal peptide spans Met1–Gly21. 2 disordered regions span residues Leu55–Asp106 and Leu272–Asn295. Positions Arg61–Asp63 match the Cell attachment site motif. Over residues Glu74–Ala90 the composition is skewed to acidic residues. The C-type lectin domain maps to Leu183–Glu320. Intrachain disulfides connect Cys204–Cys319 and Cys296–Cys311.

In terms of processing, O-glycosylated. Probably sulfated on the O-glycans. Expressed in skeletal tissues including bone marrow, chondrocytes, primary ossification center-associated cells, the perichondrium and periosteum. Lower levels of expression were detected in spleen, thymus, appendix and fetal liver.

It localises to the cytoplasm. Its subcellular location is the secreted. Promotes osteogenesis by stimulating the differentiation of mesenchymal progenitors into mature osteoblasts. Important for repair and maintenance of adult bone. The chain is C-type lectin domain family 11 member A (CLEC11A) from Homo sapiens (Human).